Reading from the N-terminus, the 126-residue chain is Large ribosomal subunit protein bL17 (126 aa).

Belongs to the bacterial ribosomal protein bL17 family. Part of the 50S ribosomal subunit. Contacts protein L32.

This chain is Large ribosomal subunit protein bL17, found in Aliivibrio salmonicida (strain LFI1238) (Vibrio salmonicida (strain LFI1238)).